We begin with the raw amino-acid sequence, 929 residues long: Isoleucine--tRNA ligase (929 aa).

Residues 58-68 (PYANGDIHIGH) carry the 'HIGH' region motif. Glu563 serves as a coordination point for L-isoleucyl-5'-AMP. Positions 605-609 (KMSKS) match the 'KMSKS' region motif. Residue Lys608 coordinates ATP. Zn(2+)-binding residues include Cys892, Cys895, Cys912, and Cys915.

This sequence belongs to the class-I aminoacyl-tRNA synthetase family. IleS type 1 subfamily. As to quaternary structure, monomer. Zn(2+) is required as a cofactor.

It localises to the cytoplasm. It carries out the reaction tRNA(Ile) + L-isoleucine + ATP = L-isoleucyl-tRNA(Ile) + AMP + diphosphate. In terms of biological role, catalyzes the attachment of isoleucine to tRNA(Ile). As IleRS can inadvertently accommodate and process structurally similar amino acids such as valine, to avoid such errors it has two additional distinct tRNA(Ile)-dependent editing activities. One activity is designated as 'pretransfer' editing and involves the hydrolysis of activated Val-AMP. The other activity is designated 'posttransfer' editing and involves deacylation of mischarged Val-tRNA(Ile). The sequence is that of Isoleucine--tRNA ligase from Neisseria meningitidis serogroup B (strain ATCC BAA-335 / MC58).